The chain runs to 38 residues: Mu-hexatoxin-Mg1b (38 aa).

Cystine bridges form between cysteine 1–cysteine 15, cysteine 8–cysteine 20, and cysteine 14–cysteine 34. Serine 38 is subject to Serine amide.

The protein belongs to the neurotoxin 14 (magi-1) family. 09 (magi-1) subfamily. Expressed by the venom gland.

Its subcellular location is the secreted. Its function is as follows. Insecticidal neurotoxin. Shows competition for site 3 of insect voltage-gated sodium channels (Nav). The chain is Mu-hexatoxin-Mg1b from Macrothele gigas (Japanese funnel web spider).